A 318-amino-acid polypeptide reads, in one-letter code: SPX domain-containing protein 4 (318 aa).

The SPX domain maps to Met1–Gln187. Residues Ser226–His237 show a composition bias toward low complexity. Disordered regions lie at residues Ser226–Ser247 and Ser284–His318. Over residues Asn305–His318 the composition is skewed to basic and acidic residues.

This chain is SPX domain-containing protein 4 (SPX4), found in Arabidopsis thaliana (Mouse-ear cress).